The primary structure comprises 421 residues: Chitin deacetylase (421 aa).

The first 21 residues, 1 to 21 (MQIKTFALSAAIAQVATLALA), serve as a signal peptide directing secretion. N39, N70, N87, and N106 each carry an N-linked (GlcNAc...) asparagine glycan. The 193-residue stretch at 157-349 (ETWGLTYDDG…YKQVIDVATC (193 aa)) folds into the NodB homology domain. D164 (proton acceptor) is an active-site residue. D164 provides a ligand contact to acetate. D165 contributes to the Co(2+) binding site. N168 carries N-linked (GlcNAc...) asparagine glycosylation. Co(2+) is bound by residues H214 and H218. Y255 contacts acetate. N-linked (GlcNAc...) asparagine glycosylation is present at N307. H320 functions as the Proton donor in the catalytic mechanism. N323, N351, and N367 each carry an N-linked (GlcNAc...) asparagine glycan. T390 is lipidated: GPI-anchor amidated threonine. The propeptide at 391-421 (AAAHIQASTSGAMSVLPNLALISAFIATLLF) is removed in mature form.

This sequence belongs to the polysaccharide deacetylase family. Co(2+) is required as a cofactor.

The protein localises to the secreted. It is found in the cell wall. The protein resides in the cell membrane. The enzyme catalyses [(1-&gt;4)-N-acetyl-beta-D-glucosaminyl](n) + n H2O = chitosan + n acetate. In terms of biological role, hydrolyzes the N-acetamido groups of N-acetyl-D-glucosamine residues in chitin to form chitosan and acetate. This is Chitin deacetylase from Amylomyces rouxii (Filamentous fungus).